The sequence spans 417 residues: Serine hydroxymethyltransferase (417 aa).

Residues Leu122 and 126–128 (GHL) each bind (6S)-5,6,7,8-tetrahydrofolate. Residue Lys230 is modified to N6-(pyridoxal phosphate)lysine. 355-357 (SPF) is a (6S)-5,6,7,8-tetrahydrofolate binding site.

Belongs to the SHMT family. As to quaternary structure, homodimer. The cofactor is pyridoxal 5'-phosphate.

Its subcellular location is the cytoplasm. It catalyses the reaction (6R)-5,10-methylene-5,6,7,8-tetrahydrofolate + glycine + H2O = (6S)-5,6,7,8-tetrahydrofolate + L-serine. The protein operates within one-carbon metabolism; tetrahydrofolate interconversion. It functions in the pathway amino-acid biosynthesis; glycine biosynthesis; glycine from L-serine: step 1/1. Its function is as follows. Catalyzes the reversible interconversion of serine and glycine with tetrahydrofolate (THF) serving as the one-carbon carrier. This reaction serves as the major source of one-carbon groups required for the biosynthesis of purines, thymidylate, methionine, and other important biomolecules. Also exhibits THF-independent aldolase activity toward beta-hydroxyamino acids, producing glycine and aldehydes, via a retro-aldol mechanism. The sequence is that of Serine hydroxymethyltransferase from Francisella tularensis subsp. tularensis (strain FSC 198).